A 494-amino-acid polypeptide reads, in one-letter code: MSVPHGPTPAPVAEPHTQEPGSDKRDGRLSVCTKVCYGIGGVPNQVASSASAFYLQLFLLDVAQIPAAQVSLALFGGKVSGAVADPVAGFFINKSRRTGSGRLMPWALGCMPLIALAYFFLWFLPPFTSLRGLWYTSFYCLFQALATFFQVPYTALTMILTPSPRERDSATAYRMTMEMAGTLMGATVHGLIVSSAHGSQRCEDTVHPRSPAVSPDVARLYCIAAAVVALTYPVCGSLLCLGVKEQPDTSAPASGQGLNFFTGLAITSQHPPYLSLVVSFLFISAAVQVEQSYLVLFCTHASKLQDHVQNLVLIILVSAVLSTPLWEWVLQRFGKKTSAFGICVMVPFSILLAAVPSAPVAYVVAFVSGVSIAVSLLLPWSMLPDVVDDFQLQHRCGPGVETIFYSSYVFFTKLSGAGALGISTLSLEFAGCEAGACQQAEEVVVTLKVLIGAVPTCMILIGLCILLVGPTPKMPRQDTSSQLSLRRRTSYSLA.

The segment covering 1-12 (MSVPHGPTPAPV) has biased composition (pro residues). The segment at 1 to 26 (MSVPHGPTPAPVAEPHTQEPGSDKRD) is disordered. The next 10 membrane-spanning stretches (helical) occupy residues 103–123 (LMPWALGCMPLIALAYFFLWF), 140–160 (CLFQALATFFQVPYTALTMIL), 179–199 (MAGTLMGATVHGLIVSSAHGS), 223–243 (IAAAVVALTYPVCGSLLCLGV), 277–297 (VVSFLFISAAVQVEQSYLVLF), 310–330 (NLVLIILVSAVLSTPLWEWVL), 339–359 (AFGICVMVPFSILLAAVPSAP), 360–380 (VAYVVAFVSGVSIAVSLLLPW), 402–422 (TIFYSSYVFFTKLSGAGALGI), and 449–469 (VLIGAVPTCMILIGLCILLVG). Residues 473-494 (KMPRQDTSSQLSLRRRTSYSLA) are disordered. Basic residues predominate over residues 485–494 (LRRRTSYSLA).

The protein belongs to the major facilitator superfamily. Widely expressed with highest expression in spleen, lung and testis. Predominantly expressed in erythroid lineages giving rise to erythrocytes and platelets, but absent in lymphoid lineages.

It is found in the cell membrane. The catalysed reaction is sphing-4-enine 1-phosphate(in) = sphing-4-enine 1-phosphate(out). It carries out the reaction sphinganine 1-phosphate(in) = sphinganine 1-phosphate(out). It catalyses the reaction sphinga-4E,14Z-dienine-1-phosphate(in) = sphinga-4E,14Z-dienine-1-phosphate(out). Its function is as follows. Lipid transporter that specifically mediates export of sphingosine-1-phosphate in red blood cells and platelets. Sphingosine-1-phosphate is a signaling sphingolipid and its export from red blood cells into in the plasma is required for red blood cell morphology. Sphingosine-1-phosphate export from platelets is required for platelet aggregation and thrombus formation. Mediates the export of different sphingosine-1-phosphate (S1P) species, including S1P(d18:0) (sphinganine 1-phosphate), S1P (d18:1) (sphing-4-enine 1-phosphate) and S1P (d18:2) (sphinga-4E,14Z-dienine-1-phosphate). Release of sphingosine-1-phosphate is facilitated by a proton gradient. In contrast, cations, such as sodium, are not required to drive sphingosine-1-phosphate transport. In addition to export, also able to mediate S1P import. Does not transport lysophosphatidylcholine (LPC). This Mus musculus (Mouse) protein is Sphingosine-1-phosphate transporter MFSD2B.